Consider the following 205-residue polypeptide: Proteasome subunit beta type-3 (205 aa).

The residue at position 2 (Ser2) is an N-acetylserine. Lys77 is subject to N6-acetyllysine.

This sequence belongs to the peptidase T1B family. As to quaternary structure, the 26S proteasome consists of a 20S proteasome core and two 19S regulatory subunits. The 20S proteasome core is a barrel-shaped complex made of 28 subunits that are arranged in four stacked rings. The two outer rings are each formed by seven alpha subunits, and the two inner rings are formed by seven beta subunits. The proteolytic activity is exerted by three beta-subunits PSMB5, PSMB6 and PSMB7.

The protein resides in the cytoplasm. It is found in the nucleus. Non-catalytic component of the 20S core proteasome complex involved in the proteolytic degradation of most intracellular proteins. This complex plays numerous essential roles within the cell by associating with different regulatory particles. Associated with two 19S regulatory particles, forms the 26S proteasome and thus participates in the ATP-dependent degradation of ubiquitinated proteins. The 26S proteasome plays a key role in the maintenance of protein homeostasis by removing misfolded or damaged proteins that could impair cellular functions, and by removing proteins whose functions are no longer required. Associated with the PA200 or PA28, the 20S proteasome mediates ubiquitin-independent protein degradation. This type of proteolysis is required in several pathways including spermatogenesis (20S-PA200 complex) or generation of a subset of MHC class I-presented antigenic peptides (20S-PA28 complex). In Bos taurus (Bovine), this protein is Proteasome subunit beta type-3 (PSMB3).